The primary structure comprises 297 residues: Small ribosomal subunit protein uS2 (297 aa).

The tract at residues 252-297 (GVPGTAFSAATAAPTSWEADGGDWAASSAAPAGESWAETQPAEAKW) is disordered. Low complexity predominate over residues 256-289 (TAFSAATAAPTSWEADGGDWAASSAAPAGESWAE).

This sequence belongs to the universal ribosomal protein uS2 family. Component of the small ribosomal subunit. Mature ribosomes consist of a small (40S) and a large (60S) subunit. The 40S subunit contains about 33 different proteins and 1 molecule of RNA (18S). The 60S subunit contains about 49 different proteins and 3 molecules of RNA (25S, 5.8S and 5S). Interacts with rps21.

It localises to the cytoplasm. Required for the assembly and/or stability of the 40S ribosomal subunit. Required for the processing of the 20S rRNA-precursor to mature 18S rRNA in a late step of the maturation of 40S ribosomal subunits. The sequence is that of Small ribosomal subunit protein uS2 (rps0) from Aspergillus fumigatus (strain CBS 144.89 / FGSC A1163 / CEA10) (Neosartorya fumigata).